Here is a 111-residue protein sequence, read N- to C-terminus: Nucleoid-associated protein Teth39_2199 (111 aa).

Belongs to the YbaB/EbfC family. In terms of assembly, homodimer.

Its subcellular location is the cytoplasm. The protein localises to the nucleoid. In terms of biological role, binds to DNA and alters its conformation. May be involved in regulation of gene expression, nucleoid organization and DNA protection. The polypeptide is Nucleoid-associated protein Teth39_2199 (Thermoanaerobacter pseudethanolicus (strain ATCC 33223 / 39E) (Clostridium thermohydrosulfuricum)).